The following is a 1087-amino-acid chain: Error-prone DNA polymerase 2 (1087 aa).

The segment at 1033-1064 (DGAFRPPTGRGDEFAHGSPGSADSRGKAPPGV) is disordered.

Belongs to the DNA polymerase type-C family. DnaE2 subfamily.

The protein resides in the cytoplasm. The catalysed reaction is DNA(n) + a 2'-deoxyribonucleoside 5'-triphosphate = DNA(n+1) + diphosphate. Functionally, DNA polymerase involved in damage-induced mutagenesis and translesion synthesis (TLS). It is not the major replicative DNA polymerase. This Rhizobium meliloti (strain 1021) (Ensifer meliloti) protein is Error-prone DNA polymerase 2.